We begin with the raw amino-acid sequence, 350 residues long: S-adenosylmethionine:tRNA ribosyltransferase-isomerase (350 aa).

The protein belongs to the QueA family. Monomer.

The protein resides in the cytoplasm. The catalysed reaction is 7-aminomethyl-7-carbaguanosine(34) in tRNA + S-adenosyl-L-methionine = epoxyqueuosine(34) in tRNA + adenine + L-methionine + 2 H(+). The protein operates within tRNA modification; tRNA-queuosine biosynthesis. In terms of biological role, transfers and isomerizes the ribose moiety from AdoMet to the 7-aminomethyl group of 7-deazaguanine (preQ1-tRNA) to give epoxyqueuosine (oQ-tRNA). This is S-adenosylmethionine:tRNA ribosyltransferase-isomerase from Bacillus cereus (strain 03BB102).